We begin with the raw amino-acid sequence, 629 residues long: tRNA uridine 5-carboxymethylaminomethyl modification enzyme MnmG (629 aa).

FAD is bound by residues 14–19, valine 126, and serine 181; that span reads GAGHAG. 273 to 287 is an NAD(+) binding site; it reads GPRYCPSIEDKVVRF. Glutamine 370 is an FAD binding site.

Belongs to the MnmG family. Homodimer. Heterotetramer of two MnmE and two MnmG subunits. FAD serves as cofactor.

The protein resides in the cytoplasm. Functionally, NAD-binding protein involved in the addition of a carboxymethylaminomethyl (cmnm) group at the wobble position (U34) of certain tRNAs, forming tRNA-cmnm(5)s(2)U34. The chain is tRNA uridine 5-carboxymethylaminomethyl modification enzyme MnmG from Bacillus mycoides (strain KBAB4) (Bacillus weihenstephanensis).